Reading from the N-terminus, the 297-residue chain is Homoserine kinase (297 aa).

82–92 (PLTRGLGSSAS) is a binding site for ATP.

It belongs to the GHMP kinase family. Homoserine kinase subfamily.

It is found in the cytoplasm. The enzyme catalyses L-homoserine + ATP = O-phospho-L-homoserine + ADP + H(+). It functions in the pathway amino-acid biosynthesis; L-threonine biosynthesis; L-threonine from L-aspartate: step 4/5. Its function is as follows. Catalyzes the ATP-dependent phosphorylation of L-homoserine to L-homoserine phosphate. This chain is Homoserine kinase, found in Bacillus thuringiensis subsp. konkukian (strain 97-27).